Here is a 183-residue protein sequence, read N- to C-terminus: Microfibrillar-associated protein 2 (183 aa).

The signal sequence occupies residues 1-17; it reads MRAASLFLLFLPAGLLA. Position 18 is a pyrrolidone carboxylic acid (Gln-18). Gln-20 is covalently cross-linked (Isoglutamyl lysine isopeptide (Gln-Lys) (interchain with K-?)). Sulfotyrosine occurs at positions 47, 48, and 50. Positions 153–183 constitute a ShKT domain; that stretch reads CRDKFSKCGVLASSGLCQSVAAACARSCGGC. Intrachain disulfides connect Cys-153–Cys-183, Cys-160–Cys-176, and Cys-169–Cys-180.

Belongs to the MFAP family. In terms of assembly, forms a ternary complex with BGN and ELN. Interacts with FBN1 (via N-terminal domain) and FBN2. Post-translationally, O-glycosylated; glycans consist of Gal(beta1-3)GalNAc. In terms of processing, forms intermolecular disulfide bonds either with other MAGP-1 molecules or with other components of the microfibrils. Forms transglutaminase cross-links with tropoelastin.

It is found in the secreted. The protein resides in the extracellular space. Its subcellular location is the extracellular matrix. Its function is as follows. Component of the elastin-associated microfibrils. The protein is Microfibrillar-associated protein 2 (MFAP2) of Bos taurus (Bovine).